The sequence spans 607 residues: Synaptotagmin-like protein 3 (607 aa).

The RabBD domain maps to 4-123 (EVDLESFKEL…IKTGEWFFEE (120 aa)). Positions 221–279 (VGHTERRSQSDTAVNVTSRKASTPDILKAFHQEDPKHPPDPVLKQDTPPSSPTHSAVFS) are disordered. Polar residues predominate over residues 230–241 (SDTAVNVTSRKA). A compositionally biased stretch (basic and acidic residues) spans 248 to 259 (KAFHQEDPKHPP). C2 domains lie at 305–430 (VTGE…ARWY) and 458–590 (LPAG…LQWH).

As to quaternary structure, monomer. Binds NRXN1. Binds RAB27A that has been activated by GTP-binding via its N-terminus. As to expression, highly expressed in spleen and lung. Detected at lower levels in heart and testis.

The protein localises to the endomembrane system. Its function is as follows. May act as Rab effector protein and play a role in vesicle trafficking. Binds phospholipids in the presence of calcium ions. This chain is Synaptotagmin-like protein 3 (Sytl3), found in Mus musculus (Mouse).